We begin with the raw amino-acid sequence, 159 residues long: Ribosomal RNA large subunit methyltransferase H (159 aa).

S-adenosyl-L-methionine is bound by residues Leu76, Gly108, and 127–132; that span reads FSKMTF.

Belongs to the RNA methyltransferase RlmH family. Homodimer.

It is found in the cytoplasm. It catalyses the reaction pseudouridine(1915) in 23S rRNA + S-adenosyl-L-methionine = N(3)-methylpseudouridine(1915) in 23S rRNA + S-adenosyl-L-homocysteine + H(+). Functionally, specifically methylates the pseudouridine at position 1915 (m3Psi1915) in 23S rRNA. The sequence is that of Ribosomal RNA large subunit methyltransferase H from Staphylococcus carnosus (strain TM300).